Reading from the N-terminus, the 446-residue chain is Methylenetetrahydrofolate--tRNA-(uracil-5-)-methyltransferase TrmFO (446 aa).

8 to 13 (GGGLAG) is a binding site for FAD.

It belongs to the MnmG family. TrmFO subfamily. It depends on FAD as a cofactor.

The protein resides in the cytoplasm. It carries out the reaction uridine(54) in tRNA + (6R)-5,10-methylene-5,6,7,8-tetrahydrofolate + NADH + H(+) = 5-methyluridine(54) in tRNA + (6S)-5,6,7,8-tetrahydrofolate + NAD(+). The enzyme catalyses uridine(54) in tRNA + (6R)-5,10-methylene-5,6,7,8-tetrahydrofolate + NADPH + H(+) = 5-methyluridine(54) in tRNA + (6S)-5,6,7,8-tetrahydrofolate + NADP(+). Functionally, catalyzes the folate-dependent formation of 5-methyl-uridine at position 54 (M-5-U54) in all tRNAs. The chain is Methylenetetrahydrofolate--tRNA-(uracil-5-)-methyltransferase TrmFO from Zymomonas mobilis subsp. mobilis (strain ATCC 31821 / ZM4 / CP4).